Reading from the N-terminus, the 569-residue chain is Estrogen receptor (569 aa).

Positions 1-151 are modulating; sequence MYPKEEHSAG…GFDSGKETRF (151 aa). Polar residues predominate over residues 28 to 37; that stretch reads PTQTFGTSSP. Positions 28-65 are disordered; that stretch reads PTQTFGTSSPAEPASVGYYPAPPDPHEEHLQTLGGGSS. NR C4-type zinc fingers lie at residues 152–172 and 188–212; these read CAVC…CEGC and CPAT…LRKC. Residues 152–217 constitute a DNA-binding region (nuclear receptor); the sequence is CAVCSDYASG…RLRKCYEVGM (66 aa). The segment at 218-278 is hinge; the sequence is MKGGIRKDRG…SGGVVSTLCM (61 aa). The interval 223-271 is disordered; the sequence is RKDRGGRSVRRERRRSSNEDRDKSSSDQCSRAGVRTTGPQDKRKKRSGG. The segment covering 237 to 247 has biased composition (basic and acidic residues); the sequence is RSSNEDRDKSS. The 237-residue stretch at 279–515 folds into the NR LBD domain; that stretch reads SPDQVLLLLL…DLLLEMLDAQ (237 aa). Over residues 523–532 the composition is skewed to polar residues; that stretch reads VQRVWSQSEK. The disordered stretch occupies residues 523–569; that stretch reads VQRVWSQSEKNPPSTPTTSSSSSNNSPRGGAAAIQSNGACHSHSPDP. A compositionally biased stretch (low complexity) spans 538–549; that stretch reads PTTSSSSSNNSP.

It belongs to the nuclear hormone receptor family. NR3 subfamily. In terms of assembly, binds DNA as a homodimer. Can form a heterodimer with ER-beta.

It is found in the nucleus. In terms of biological role, the steroid hormones and their receptors are involved in the regulation of eukaryotic gene expression and affect cellular proliferation and differentiation in target tissues. This Danio rerio (Zebrafish) protein is Estrogen receptor (esr1).